The sequence spans 470 residues: Myricetin 3-O-rhamnoside 1,2-glucosyltransferase UGT709G2 (470 aa).

Residue H20 is the Proton acceptor of the active site. H20 contributes to the an anthocyanidin binding site. D117 serves as the catalytic Charge relay. 7 residues coordinate UDP-alpha-D-glucose: A340, Q342, H357, W360, N361, S362, and E365. Residue A380 coordinates an anthocyanidin. UDP-alpha-D-glucose-binding residues include D381 and Q382.

The protein belongs to the UDP-glycosyltransferase family. In terms of tissue distribution, expressed in young cromes.

It carries out the reaction myricetin 3-O-alpha-L-rhamnoside + UDP-alpha-D-glucose = myricetin 3-O-[beta-D-glucosyl-(1-&gt;2)-alpha-L-rhamnoside] + UDP + H(+). The protein operates within flavonoid metabolism. In terms of biological role, glucosyltransferase involved in montbretin A (MbA) biosynthesis. Catalyzes the glucosylation of myricetin 3-O-alpha-L-rhamnoside (MR) to produce myricetin 3-O-[beta-D-glucosyl-(1-&gt;2)-alpha-L-rhamnoside] (MRG), a precursor of MbA. MbA is a potent inhibitor of human pancreatic alpha-amylase and is being developed as drug candidate to treat type-2 diabetes. In vitro, is able to transfer UDP-xylose with 50-fold less efficiency compared with UDP-glucose. In vitro, can use myricetin 3-O-glucoside and quercetin 3-O-glucoside as substrates, although these two flavonoids may not be physiological substrates in vivo. The sequence is that of Myricetin 3-O-rhamnoside 1,2-glucosyltransferase UGT709G2 from Crocosmia x crocosmiiflora (Montbretia).